An 829-amino-acid chain; its full sequence is Leucine--tRNA ligase (829 aa).

The 'HIGH' region signature appears at 42-52 (PYPSGNLHMGH). The short motif at 582–586 (KMSKS) is the 'KMSKS' region element. Lys-585 lines the ATP pocket.

The protein belongs to the class-I aminoacyl-tRNA synthetase family.

The protein localises to the cytoplasm. It carries out the reaction tRNA(Leu) + L-leucine + ATP = L-leucyl-tRNA(Leu) + AMP + diphosphate. The protein is Leucine--tRNA ligase of Moorella thermoacetica (strain ATCC 39073 / JCM 9320).